Consider the following 138-residue polypeptide: Proofreading thioesterase EntH (138 aa).

E64 (nucleophile or proton acceptor) is an active-site residue.

This sequence belongs to the thioesterase PaaI family. As to quaternary structure, homotetramer. Dimer of dimers. Interacts specifically with the aryl carrier protein (ArCP) domain of EntB.

Its subcellular location is the cytoplasm. It participates in siderophore biosynthesis; enterobactin biosynthesis. Its function is as follows. Required for optimal enterobactin synthesis. Acts as a proofreading enzyme that prevents EntB misacylation by hydrolyzing the thioester bound existing between EntB and wrongly charged molecules. The protein is Proofreading thioesterase EntH of Citrobacter rodentium (strain ICC168) (Citrobacter freundii biotype 4280).